Consider the following 454-residue polypeptide: tRNA modification GTPase MnmE (454 aa).

Residues arginine 23, glutamate 80, and lysine 120 each contribute to the (6S)-5-formyl-5,6,7,8-tetrahydrofolate site. In terms of domain architecture, TrmE-type G spans 216–377 (GMKVVIAGRP…LRSHLKEAMG (162 aa)). Residue asparagine 226 participates in K(+) binding. GTP contacts are provided by residues 226 to 231 (NAGKSS), 245 to 251 (TDIAGTT), 270 to 273 (DTAG), and 358 to 360 (SAR). Serine 230 contributes to the Mg(2+) binding site. Threonine 245, isoleucine 247, and threonine 250 together coordinate K(+). A Mg(2+)-binding site is contributed by threonine 251. Lysine 454 lines the (6S)-5-formyl-5,6,7,8-tetrahydrofolate pocket.

Belongs to the TRAFAC class TrmE-Era-EngA-EngB-Septin-like GTPase superfamily. TrmE GTPase family. Homodimer. Heterotetramer of two MnmE and two MnmG subunits. It depends on K(+) as a cofactor.

It is found in the cytoplasm. Functionally, exhibits a very high intrinsic GTPase hydrolysis rate. Involved in the addition of a carboxymethylaminomethyl (cmnm) group at the wobble position (U34) of certain tRNAs, forming tRNA-cmnm(5)s(2)U34. The protein is tRNA modification GTPase MnmE of Proteus mirabilis (strain HI4320).